The sequence spans 373 residues: Anhydro-N-acetylmuramic acid kinase (373 aa).

13–20 (GTSMDGID) contacts ATP.

This sequence belongs to the anhydro-N-acetylmuramic acid kinase family.

It catalyses the reaction 1,6-anhydro-N-acetyl-beta-muramate + ATP + H2O = N-acetyl-D-muramate 6-phosphate + ADP + H(+). The protein operates within amino-sugar metabolism; 1,6-anhydro-N-acetylmuramate degradation. It functions in the pathway cell wall biogenesis; peptidoglycan recycling. Functionally, catalyzes the specific phosphorylation of 1,6-anhydro-N-acetylmuramic acid (anhMurNAc) with the simultaneous cleavage of the 1,6-anhydro ring, generating MurNAc-6-P. Is required for the utilization of anhMurNAc either imported from the medium or derived from its own cell wall murein, and thus plays a role in cell wall recycling. The chain is Anhydro-N-acetylmuramic acid kinase from Agrobacterium fabrum (strain C58 / ATCC 33970) (Agrobacterium tumefaciens (strain C58)).